A 283-amino-acid chain; its full sequence is Putative transcription factor kapC (283 aa).

Over residues 1–10 the composition is skewed to pro residues; it reads MQPTLAPAPH. Positions 1–121 are disordered; that stretch reads MQPTLAPAPH…NRAAQRAFRQ (121 aa). The segment covering 26-42 has biased composition (low complexity); sequence HDQLLAAHQHLSHPQQA. Residues 55-67 are compositionally biased toward polar residues; that stretch reads QPNTTSPRDQNNI. The bZIP domain occupies 102–165; sequence PLSTSKRAAQ…EYIINLQSRL (64 aa). The interval 103 to 126 is basic motif; that stretch reads LSTSKRAAQNRAAQRAFRQRKESY. The segment covering 108–118 has biased composition (low complexity); it reads RAAQNRAAQRA. Positions 130 to 161 are leucine-zipper; it reads LEEQVKEFDNTNETMKQLQAENYQLREYIINL. A disordered region spans residues 178–283; that stretch reads NIDLNQPRND…EPGHGLPVVS (106 aa).

This sequence belongs to the bZIP family.

It is found in the nucleus. In terms of biological role, putative transcription factor. This Aspergillus niger (strain ATCC MYA-4892 / CBS 513.88 / FGSC A1513) protein is Putative transcription factor kapC (kapC).